The sequence spans 103 residues: uncharacterized protein (103 aa).

The interval 69-103 (SSISYPGGGGGGGGSAKSLSSSKPGGGGGSPLIFL) is disordered. 2 stretches are compositionally biased toward gly residues: residues 74-83 (PGGGGGGGGS) and 92-103 (PGGGGGSPLIFL).

This is an uncharacterized protein from Saccharomyces cerevisiae (strain ATCC 204508 / S288c) (Baker's yeast).